The primary structure comprises 82 residues: MNNSKDNPFCGAIARKARIYLREGLDCVYFLNKAGQAESCPACTSLVFQGKTCEEHKYNNNLLSWQAVRQLERQMPQLQSSN.

Involved in host translation shutoff without degradating host RNA. By suppressing host gene expression, facilitates the evasion from host type I interferon immune response. The chain is Host translation inhibitor 5b from Gallus gallus (Chicken).